The primary structure comprises 546 residues: CTP synthase (546 aa).

The tract at residues 1–266 (MTKYIFVTGG…GDYLVERLGL (266 aa)) is amidoligase domain. Serine 13 provides a ligand contact to CTP. Serine 13 contacts UTP. An ATP-binding site is contributed by 14–19 (SVGKGI). Residue tyrosine 54 participates in L-glutamine binding. Aspartate 71 is a binding site for ATP. Mg(2+)-binding residues include aspartate 71 and glutamate 141. Residues 148–150 (DIE), 187–192 (KTKPTQ), and lysine 223 contribute to the CTP site. Residues 187 to 192 (KTKPTQ) and lysine 223 each bind UTP. Residues 291–533 (PIALVGKYVE…VAAAAQTLLA (243 aa)) enclose the Glutamine amidotransferase type-1 domain. An L-glutamine-binding site is contributed by glycine 353. Cysteine 380 functions as the Nucleophile; for glutamine hydrolysis in the catalytic mechanism. L-glutamine contacts are provided by residues 381–384 (LGMQ), glutamate 404, and arginine 461. Catalysis depends on residues histidine 506 and glutamate 508.

Belongs to the CTP synthase family. Homotetramer.

The catalysed reaction is UTP + L-glutamine + ATP + H2O = CTP + L-glutamate + ADP + phosphate + 2 H(+). It carries out the reaction L-glutamine + H2O = L-glutamate + NH4(+). It catalyses the reaction UTP + NH4(+) + ATP = CTP + ADP + phosphate + 2 H(+). It participates in pyrimidine metabolism; CTP biosynthesis via de novo pathway; CTP from UDP: step 2/2. Its activity is regulated as follows. Allosterically activated by GTP, when glutamine is the substrate; GTP has no effect on the reaction when ammonia is the substrate. The allosteric effector GTP functions by stabilizing the protein conformation that binds the tetrahedral intermediate(s) formed during glutamine hydrolysis. Inhibited by the product CTP, via allosteric rather than competitive inhibition. Its function is as follows. Catalyzes the ATP-dependent amination of UTP to CTP with either L-glutamine or ammonia as the source of nitrogen. Regulates intracellular CTP levels through interactions with the four ribonucleotide triphosphates. This chain is CTP synthase, found in Chloroflexus aurantiacus (strain ATCC 29366 / DSM 635 / J-10-fl).